A 1034-amino-acid polypeptide reads, in one-letter code: Isoleucine--tRNA ligase (1034 aa).

Positions 46 to 56 match the 'HIGH' region motif; that stretch reads PYCSGAIHLGT. A 'KMSKS' region motif is present at residues 598–602; the sequence is KMSKS. Lys601 contacts ATP.

This sequence belongs to the class-I aminoacyl-tRNA synthetase family. IleS type 2 subfamily. Monomer. Requires Zn(2+) as cofactor.

Its subcellular location is the cytoplasm. The catalysed reaction is tRNA(Ile) + L-isoleucine + ATP = L-isoleucyl-tRNA(Ile) + AMP + diphosphate. Its function is as follows. Catalyzes the attachment of isoleucine to tRNA(Ile). As IleRS can inadvertently accommodate and process structurally similar amino acids such as valine, to avoid such errors it has two additional distinct tRNA(Ile)-dependent editing activities. One activity is designated as 'pretransfer' editing and involves the hydrolysis of activated Val-AMP. The other activity is designated 'posttransfer' editing and involves deacylation of mischarged Val-tRNA(Ile). The protein is Isoleucine--tRNA ligase of Methanococcus maripaludis (strain DSM 14266 / JCM 13030 / NBRC 101832 / S2 / LL).